The chain runs to 360 residues: Peptide chain release factor 1 (360 aa).

Gln235 carries the N5-methylglutamine modification. Over residues 284–293 (ARRQQEESST) the composition is skewed to basic and acidic residues. The segment at 284–314 (ARRQQEESSTRRNLLGSGDRSDRNRTYNFPQ) is disordered.

This sequence belongs to the prokaryotic/mitochondrial release factor family. Methylated by PrmC. Methylation increases the termination efficiency of RF1.

It localises to the cytoplasm. Its function is as follows. Peptide chain release factor 1 directs the termination of translation in response to the peptide chain termination codons UAG and UAA. In Erwinia tasmaniensis (strain DSM 17950 / CFBP 7177 / CIP 109463 / NCPPB 4357 / Et1/99), this protein is Peptide chain release factor 1.